A 507-amino-acid polypeptide reads, in one-letter code: MKNTYYITTPIYYVNDVSHIGHAYTSVASDVIARFMRCCGKDVMFLTGTDEHGQKVEKAAINKNIDPQSFTDKTSQNFRDLMVAMNISNDDFIRTTENRHKKAVAVFWQKLLDNGAIYEGFYEGWYSVRDEAFYDESEITEDKLAPTGAPVEWVKEPSYFFNLAKWQDKLLEFYELNPDFVRPISRRNEVISFVKSGLKDLSISRTTFNWGIKVPNNEKHVIYVWLDALVNYISALGYPDQQSNYSKFWPANLQVVGKDILRFHAVYWPAFLMAAEISPPKSIMVHGWWTNAGQKISKSLGNTIDPITLIDEFGVDQVRYFLMREVIFGADANFTRNNLITRINSELSNKIGNLLHRIVSFVYNNNDAKVPLIKSGVIDKIYELPILKTAMKFAQENILLMDKIEINKILENIINLAEDANIYIANEAPWNLKKTDYDKMLEVLYTLLEVLRYVAIMLQPFVPSSANKMLDQLGVAKEERLFKHLVRDHALKAGSNILEPSIIFPKI.

The short motif at 12–22 (YYVNDVSHIGH) is the 'HIGH' region element. Positions 295 to 299 (KISKS) match the 'KMSKS' region motif. Lys-298 serves as a coordination point for ATP.

Belongs to the class-I aminoacyl-tRNA synthetase family. MetG type 2B subfamily. As to quaternary structure, monomer.

Its subcellular location is the cytoplasm. It catalyses the reaction tRNA(Met) + L-methionine + ATP = L-methionyl-tRNA(Met) + AMP + diphosphate. Is required not only for elongation of protein synthesis but also for the initiation of all mRNA translation through initiator tRNA(fMet) aminoacylation. The protein is Methionine--tRNA ligase of Rickettsia typhi (strain ATCC VR-144 / Wilmington).